The primary structure comprises 494 residues: UDP-glucose 6-dehydrogenase (494 aa).

Residues 11 to 16, Asp36, Arg41, 89 to 93, and 130 to 132 contribute to the NAD(+) site; these read GAGYVG, VNTPT, and STV. Residues 88 to 110 are disordered; that stretch reads SVNTPTKTYGMGKGRAADLKYIE. An allosteric switch region region spans residues 129–135; the sequence is KSTVPVR. Glu161 functions as the Proton donor/acceptor in the catalytic mechanism. Residues 161–165, 220–224, Arg260, and 267–273 contribute to the substrate site; these read EFLAE, KLAAN, and KASVGFG. Glu165 lines the NAD(+) pocket. The active-site Proton donor/acceptor is the Lys220. The active-site Nucleophile is the Cys276. Position 276-279 (276-279) interacts with NAD(+); sequence CFQK. The important for formation of active hexamer structure stretch occupies residues 321 to 325; it reads SLFNT. 338-339 lines the substrate pocket; it reads FK. Arg346 serves as a coordination point for NAD(+). Substrate is bound at residue Arg442. Positions 466-494 are disordered; it reads VSAKRIPFASSCEIPKFSLQDPPVKKPRV.

The protein belongs to the UDP-glucose/GDP-mannose dehydrogenase family. As to quaternary structure, homohexamer.

The enzyme catalyses UDP-alpha-D-glucose + 2 NAD(+) + H2O = UDP-alpha-D-glucuronate + 2 NADH + 3 H(+). It participates in nucleotide-sugar biosynthesis; UDP-alpha-D-glucuronate biosynthesis; UDP-alpha-D-glucuronate from UDP-alpha-D-glucose: step 1/1. UDP-alpha-D-xylose (UDX) acts as a feedback inhibitor. It binds at the same site as the substrate, but functions as allosteric inhibitor by triggering a conformation change that disrupts the active hexameric ring structure and gives rise to an inactive, horseshoe-shaped hexamer. In terms of biological role, catalyzes the formation of UDP-alpha-D-glucuronate, a constituent of complex glycosaminoglycans. Required for the biosynthesis of chondroitin sulfate and heparan sulfate. Required for embryonic development via its role in the biosynthesis of glycosaminoglycans. The polypeptide is UDP-glucose 6-dehydrogenase (UGDH) (Gallus gallus (Chicken)).